A 108-amino-acid polypeptide reads, in one-letter code: Large ribosomal subunit protein bL21 (108 aa).

It belongs to the bacterial ribosomal protein bL21 family. As to quaternary structure, part of the 50S ribosomal subunit. Contacts protein L20.

In terms of biological role, this protein binds to 23S rRNA in the presence of protein L20. This is Large ribosomal subunit protein bL21 from Orientia tsutsugamushi (strain Ikeda) (Rickettsia tsutsugamushi).